Consider the following 303-residue polypeptide: Recombination-associated protein RdgC (303 aa).

This sequence belongs to the RdgC family.

The protein resides in the cytoplasm. The protein localises to the nucleoid. Functionally, may be involved in recombination. The sequence is that of Recombination-associated protein RdgC from Shewanella loihica (strain ATCC BAA-1088 / PV-4).